The chain runs to 353 residues: S-adenosylmethionine:tRNA ribosyltransferase-isomerase (353 aa).

Belongs to the QueA family. Monomer.

It is found in the cytoplasm. The enzyme catalyses 7-aminomethyl-7-carbaguanosine(34) in tRNA + S-adenosyl-L-methionine = epoxyqueuosine(34) in tRNA + adenine + L-methionine + 2 H(+). It functions in the pathway tRNA modification; tRNA-queuosine biosynthesis. Its function is as follows. Transfers and isomerizes the ribose moiety from AdoMet to the 7-aminomethyl group of 7-deazaguanine (preQ1-tRNA) to give epoxyqueuosine (oQ-tRNA). This chain is S-adenosylmethionine:tRNA ribosyltransferase-isomerase, found in Blochmanniella floridana.